A 425-amino-acid polypeptide reads, in one-letter code: Glutamate-1-semialdehyde 2,1-aminomutase (425 aa).

K264 is modified (N6-(pyridoxal phosphate)lysine).

This sequence belongs to the class-III pyridoxal-phosphate-dependent aminotransferase family. HemL subfamily. Homodimer. Pyridoxal 5'-phosphate is required as a cofactor.

It is found in the cytoplasm. The catalysed reaction is (S)-4-amino-5-oxopentanoate = 5-aminolevulinate. Its pathway is porphyrin-containing compound metabolism; protoporphyrin-IX biosynthesis; 5-aminolevulinate from L-glutamyl-tRNA(Glu): step 2/2. The sequence is that of Glutamate-1-semialdehyde 2,1-aminomutase from Hydrogenobaculum sp. (strain Y04AAS1).